Consider the following 156-residue polypeptide: Sperm acrosome-associated protein 5 (156 aa).

An N-terminal signal peptide occupies residues 1–18 (MQVSGTIVVILMAANVEA). One can recognise a C-type lysozyme domain in the interval 19–147 (KIYERCDLAK…SEWLRGCHMN (129 aa)). 4 disulfides stabilise this stretch: cysteine 24–cysteine 144, cysteine 48–cysteine 132, cysteine 82–cysteine 97, and cysteine 93–cysteine 111. Glutamate 53 is a catalytic residue.

Belongs to the glycosyl hydrolase 22 family.

It is found in the secreted. The enzyme catalyses Hydrolysis of (1-&gt;4)-beta-linkages between N-acetylmuramic acid and N-acetyl-D-glucosamine residues in a peptidoglycan and between N-acetyl-D-glucosamine residues in chitodextrins.. The polypeptide is Sperm acrosome-associated protein 5 (SPACA5) (Bos taurus (Bovine)).